We begin with the raw amino-acid sequence, 254 residues long: Putative ankyrin-containing lipoprotein Lxx09580 (254 aa).

The signal sequence occupies residues M1–G22. C23 carries N-palmitoyl cysteine lipidation. C23 carries the S-diacylglycerol cysteine lipid modification. 5 ANK repeats span residues A56–D85, G89–A118, I122–A151, F155–H184, and P188–I222.

It is found in the cell membrane. The protein is Putative ankyrin-containing lipoprotein Lxx09580 of Leifsonia xyli subsp. xyli (strain CTCB07).